Reading from the N-terminus, the 187-residue chain is Peptidyl-tRNA hydrolase (187 aa).

A tRNA-binding site is contributed by tyrosine 15. Histidine 20 (proton acceptor) is an active-site residue. Residues phenylalanine 64, asparagine 66, and asparagine 112 each coordinate tRNA.

Belongs to the PTH family. As to quaternary structure, monomer.

It localises to the cytoplasm. It catalyses the reaction an N-acyl-L-alpha-aminoacyl-tRNA + H2O = an N-acyl-L-amino acid + a tRNA + H(+). In terms of biological role, hydrolyzes ribosome-free peptidyl-tRNAs (with 1 or more amino acids incorporated), which drop off the ribosome during protein synthesis, or as a result of ribosome stalling. Its function is as follows. Catalyzes the release of premature peptidyl moieties from peptidyl-tRNA molecules trapped in stalled 50S ribosomal subunits, and thus maintains levels of free tRNAs and 50S ribosomes. The protein is Peptidyl-tRNA hydrolase of Bacteroides fragilis (strain ATCC 25285 / DSM 2151 / CCUG 4856 / JCM 11019 / LMG 10263 / NCTC 9343 / Onslow / VPI 2553 / EN-2).